A 186-amino-acid chain; its full sequence is Translation initiation factor IF-3 (186 aa).

Belongs to the IF-3 family. In terms of assembly, monomer.

The protein resides in the cytoplasm. In terms of biological role, IF-3 binds to the 30S ribosomal subunit and shifts the equilibrium between 70S ribosomes and their 50S and 30S subunits in favor of the free subunits, thus enhancing the availability of 30S subunits on which protein synthesis initiation begins. This is Translation initiation factor IF-3 from Chlamydia muridarum (strain MoPn / Nigg).